The following is a 568-amino-acid chain: Potassium-transporting ATPase potassium-binding subunit (568 aa).

10 consecutive transmembrane segments (helical) span residues 1–21, 60–80, 129–149, 174–194, 251–271, 278–298, 381–401, 420–440, 488–508, and 528–548; these read MWLT…LAVP, GLAL…LLRA, AITF…AGFI, VMLP…VPQA, IHIL…GSML, WVLF…VFTA, VGLI…GMMI, VMLA…LAAV, IGLA…ALAG, and PLFM…TFLP.

Belongs to the KdpA family. As to quaternary structure, the system is composed of three essential subunits: KdpA, KdpB and KdpC.

It localises to the cell inner membrane. In terms of biological role, part of the high-affinity ATP-driven potassium transport (or Kdp) system, which catalyzes the hydrolysis of ATP coupled with the electrogenic transport of potassium into the cytoplasm. This subunit binds the periplasmic potassium ions and delivers the ions to the membrane domain of KdpB through an intramembrane tunnel. The protein is Potassium-transporting ATPase potassium-binding subunit of Delftia acidovorans (strain DSM 14801 / SPH-1).